We begin with the raw amino-acid sequence, 469 residues long: 3-isopropylmalate dehydratase large subunit (469 aa).

Cys-347, Cys-407, and Cys-410 together coordinate [4Fe-4S] cluster.

Belongs to the aconitase/IPM isomerase family. LeuC type 1 subfamily. Heterodimer of LeuC and LeuD. The cofactor is [4Fe-4S] cluster.

It carries out the reaction (2R,3S)-3-isopropylmalate = (2S)-2-isopropylmalate. It participates in amino-acid biosynthesis; L-leucine biosynthesis; L-leucine from 3-methyl-2-oxobutanoate: step 2/4. Catalyzes the isomerization between 2-isopropylmalate and 3-isopropylmalate, via the formation of 2-isopropylmaleate. This is 3-isopropylmalate dehydratase large subunit from Synechococcus sp. (strain RCC307).